The primary structure comprises 843 residues: Beta-mannosidase B (843 aa).

The active-site Proton donor is the glutamate 430. The N-linked (GlcNAc...) asparagine glycan is linked to asparagine 721.

The protein belongs to the glycosyl hydrolase 2 family. Beta-mannosidase B subfamily.

The catalysed reaction is Hydrolysis of terminal, non-reducing beta-D-mannose residues in beta-D-mannosides.. It functions in the pathway glycan metabolism; N-glycan degradation. Exoglycosidase that cleaves the single beta-linked mannose residue from the non-reducing end of beta-mannosidic oligosaccharides of various complexity and length. Prefers mannobiose over mannotriose and has no activity against polymeric mannan. Is also severely restricted by galactosyl substitutions at the +1 subsite. The polypeptide is Beta-mannosidase B (mndB) (Aspergillus terreus (strain NIH 2624 / FGSC A1156)).